We begin with the raw amino-acid sequence, 301 residues long: Bifunctional protein FolD (301 aa).

NADP(+) contacts are provided by residues 164–166 (GRS), serine 191, and isoleucine 232.

The protein belongs to the tetrahydrofolate dehydrogenase/cyclohydrolase family. In terms of assembly, homodimer.

The catalysed reaction is (6R)-5,10-methylene-5,6,7,8-tetrahydrofolate + NADP(+) = (6R)-5,10-methenyltetrahydrofolate + NADPH. It carries out the reaction (6R)-5,10-methenyltetrahydrofolate + H2O = (6R)-10-formyltetrahydrofolate + H(+). It functions in the pathway one-carbon metabolism; tetrahydrofolate interconversion. Functionally, catalyzes the oxidation of 5,10-methylenetetrahydrofolate to 5,10-methenyltetrahydrofolate and then the hydrolysis of 5,10-methenyltetrahydrofolate to 10-formyltetrahydrofolate. This is Bifunctional protein FolD from Borrelia garinii subsp. bavariensis (strain ATCC BAA-2496 / DSM 23469 / PBi) (Borreliella bavariensis).